The primary structure comprises 297 residues: Acetyl-coenzyme A carboxylase carboxyl transferase subunit beta (297 aa).

A disordered region spans residues Met-1 to Pro-23. Residues Val-26–Glu-295 enclose the CoA carboxyltransferase N-terminal domain. Zn(2+) contacts are provided by Cys-30, Cys-33, Cys-49, and Cys-52. Residues Cys-30–Cys-52 form a C4-type zinc finger.

Belongs to the AccD/PCCB family. Acetyl-CoA carboxylase is a heterohexamer composed of biotin carboxyl carrier protein (AccB), biotin carboxylase (AccC) and two subunits each of ACCase subunit alpha (AccA) and ACCase subunit beta (AccD). Zn(2+) serves as cofactor.

The protein localises to the cytoplasm. The enzyme catalyses N(6)-carboxybiotinyl-L-lysyl-[protein] + acetyl-CoA = N(6)-biotinyl-L-lysyl-[protein] + malonyl-CoA. Its pathway is lipid metabolism; malonyl-CoA biosynthesis; malonyl-CoA from acetyl-CoA: step 1/1. Component of the acetyl coenzyme A carboxylase (ACC) complex. Biotin carboxylase (BC) catalyzes the carboxylation of biotin on its carrier protein (BCCP) and then the CO(2) group is transferred by the transcarboxylase to acetyl-CoA to form malonyl-CoA. The sequence is that of Acetyl-coenzyme A carboxylase carboxyl transferase subunit beta from Actinobacillus pleuropneumoniae serotype 3 (strain JL03).